The chain runs to 57 residues: MKNAKQEHFELDQEWVELMVEAKEANISPEEIRKYLLLNKKSAHPGPAARSHTVNPF.

The Sin domain occupies 2-40; the sequence is KNAKQEHFELDQEWVELMVEAKEANISPEEIRKYLLLNK.

In terms of assembly, heterodimer with SinR.

Acts as an antagonist to SinR. SinI prevents SinR from binding to its target sequence on the gene for AprE. This Bacillus subtilis (strain 168) protein is Protein SinI (sinI).